We begin with the raw amino-acid sequence, 594 residues long: Aspartate--tRNA(Asp/Asn) ligase (594 aa).

Residue E173 participates in L-aspartate binding. The tract at residues 197-200 (QLFK) is aspartate. R219 provides a ligand contact to L-aspartate. ATP contacts are provided by residues 219–221 (RDE) and Q228. H451 is an L-aspartate binding site. Position 485 (E485) interacts with ATP. R492 contributes to the L-aspartate binding site. 537–540 (GWDR) contributes to the ATP binding site. A disordered region spans residues 566–594 (PLTDAPAPITAQQRKESGIDAQPKRVQQA).

Belongs to the class-II aminoacyl-tRNA synthetase family. Type 1 subfamily. In terms of assembly, homodimer.

Its subcellular location is the cytoplasm. It catalyses the reaction tRNA(Asx) + L-aspartate + ATP = L-aspartyl-tRNA(Asx) + AMP + diphosphate. Functionally, aspartyl-tRNA synthetase with relaxed tRNA specificity since it is able to aspartylate not only its cognate tRNA(Asp) but also tRNA(Asn). Reaction proceeds in two steps: L-aspartate is first activated by ATP to form Asp-AMP and then transferred to the acceptor end of tRNA(Asp/Asn). The protein is Aspartate--tRNA(Asp/Asn) ligase of Mycobacterium tuberculosis (strain CDC 1551 / Oshkosh).